The chain runs to 274 residues: Purine nucleoside phosphorylase YlmD (274 aa).

Inosine is bound at residue 46 to 47; it reads LH. Zn(2+)-binding residues include His-80, Cys-125, His-142, Cys-182, Cys-183, Cys-242, and Cys-245. Arg-262 contacts inosine.

Belongs to the purine nucleoside phosphorylase YfiH/LACC1 family. The cofactor is Zn(2+).

It carries out the reaction adenosine + phosphate = alpha-D-ribose 1-phosphate + adenine. The catalysed reaction is S-methyl-5'-thioadenosine + phosphate = 5-(methylsulfanyl)-alpha-D-ribose 1-phosphate + adenine. The enzyme catalyses inosine + phosphate = alpha-D-ribose 1-phosphate + hypoxanthine. It catalyses the reaction adenosine + H2O + H(+) = inosine + NH4(+). In terms of biological role, purine nucleoside enzyme that catalyzes the phosphorolysis of adenosine and inosine nucleosides, yielding D-ribose 1-phosphate and the respective free bases, adenine and hypoxanthine. Also catalyzes the phosphorolysis of S-methyl-5'-thioadenosine into adenine and S-methyl-5-thio-alpha-D-ribose 1-phosphate. Also has adenosine deaminase activity. The sequence is that of Purine nucleoside phosphorylase YlmD from Geobacillus stearothermophilus (strain DSM 13240 / CIP 106956 / 10).